We begin with the raw amino-acid sequence, 54 residues long: Ferredoxin (54 aa).

4Fe-4S ferredoxin-type domains are found at residues 2–25 (YVIN…IQQG) and 26–54 (SIYA…NPED). The [4Fe-4S] cluster site is built by Cys-8, Cys-11, Cys-14, Cys-18, Cys-35, Cys-38, Cys-41, and Cys-45.

[4Fe-4S] cluster serves as cofactor.

In terms of biological role, ferredoxins are iron-sulfur proteins that transfer electrons in a wide variety of metabolic reactions. In Peptoniphilus asaccharolyticus (Peptostreptococcus asaccharolyticus), this protein is Ferredoxin.